The following is an 83-amino-acid chain: Non-muscle caldesmon (83 aa).

Basic and acidic residues-rich tracts occupy residues 1–44 (QTSE…KEEK) and 62–76 (NQLK…KESK). The interval 1–63 (QTSEKEGRSE…PKPGSIEENQ (63 aa)) is myosin and calmodulin-binding. Positions 1–83 (QTSEKEGRSE…ESKNILSLCL (83 aa)) are disordered.

In non-muscle cells, phosphorylation by CDC2 during mitosis causes caldesmon to dissociate from microfilaments. Phosphorylation reduces caldesmon binding to actin, myosin, and calmodulin as well as its inhibition of actomyosin ATPase activity. Phosphorylation also occurs in both quiescent and dividing smooth muscle cells with similar effects on the interaction with actin and calmodulin and on microfilaments reorganization.

It localises to the cytoplasm. The protein resides in the cytoskeleton. It is found in the myofibril. The protein localises to the stress fiber. Actin- and myosin-binding protein implicated in the regulation of actomyosin interactions in smooth muscle and nonmuscle cells (could act as a bridge between myosin and actin filaments). Stimulates actin binding of tropomyosin which increases the stabilization of actin filament structure. In muscle tissues, inhibits the actomyosin ATPase by binding to F-actin. This inhibition is attenuated by calcium-calmodulin and is potentiated by tropomyosin. Interacts with actin, myosin, two molecules of tropomyosin and with calmodulin. Also plays an essential role during cellular mitosis and receptor capping. The protein is Non-muscle caldesmon (CALD1) of Bos taurus (Bovine).